A 123-amino-acid chain; its full sequence is UPF0102 protein mma_0204 (123 aa).

The protein belongs to the UPF0102 family.

This chain is UPF0102 protein mma_0204, found in Janthinobacterium sp. (strain Marseille) (Minibacterium massiliensis).